The primary structure comprises 1504 residues: Nischarin (1504 aa).

An N-acetylalanine modification is found at A2. A necessary for binding to phosphoinositide-3-P; not sufficient for targeting to endosomes region spans residues 2-133 (ATARTFGPER…GITAALAEEL (132 aa)). One can recognise a PX domain in the interval 11-121 (REAEPAKEAR…AHFLHFHFYE (111 aa)). The tract at residues 120–695 (YEINGITAAL…ERLALEWALG (576 aa)) is necessary for homooligomerization and targeting to endosomes. The interaction with PAK1 stretch occupies residues 245–869 (LSVRFSATSM…LVYSDKRMVQ (625 aa)). 6 LRR repeats span residues 288–309 (ALTT…VKLI), 311–332 (KIEF…QHLY), 333–354 (NLVH…HTKL), 356–377 (NIKT…HKLY), 378–399 (SLVN…RSIG), and 403–424 (CLEH…RTKV). Residues 463-478 (KSKLSNPEKKGGEDSR) show a composition bias toward basic and acidic residues. 4 disordered regions span residues 463 to 501 (KSKL…SASL), 524 to 547 (SSTD…LESI), 554 to 573 (SDDL…EHAE), and 628 to 687 (REEG…EEER). Phosphoserine is present on residues S541, S543, and S546. Residues 634-695 (EQGEEEDEEE…ERLALEWALG (62 aa)) are a coiled coil. Acidic residues-rich tracts occupy residues 635 to 649 (QGEE…EEDV) and 661 to 685 (DVEE…EAEE). An interaction with LIMK region spans residues 660–869 (PDVEEEEGGG…LVYSDKRMVQ (210 aa)). The interaction with ITGA5 stretch occupies residues 709–807 (KVLWCFLIHV…ANLHEFHADL (99 aa)). The disordered stretch occupies residues 1016–1104 (TPGTGGSPQG…PAPPPAEAPA (89 aa)). Phosphoserine is present on S1022. Positions 1032-1043 (PAERRASNDQRP) are enriched in basic and acidic residues. Positions 1063-1078 (PAAASASGPAKTPAPA) are enriched in low complexity. T1282 is modified (phosphothreonine). Position 1284 is a phosphoserine (S1284).

As to quaternary structure, homooligomer. Interacts with GRB2. Interacts with PIK3R1; probably associates with the PI3-kinase complex. Interacts with IRS4. Found in a complex with ITGA5 and PAK1. Found in a complex with LIMK1 and PAK1. Interacts with ITGA5 (via cytoplasmic domain); this interaction is direct. Interacts with PAK1 (via kinase domain); this interaction is direct and is increased upon activation of PAK1. Interacts with LIMK1 (via PDZ and kinase domain); this interaction is direct. Interacts with LIMK2; this interaction depends on LIMK2 activity. Interacts with RAC1 (activated state). Interacts with STK11; this interaction may increase STK11 activity. In terms of tissue distribution, isoform 1, isoform 3 and isoform 4 are expressed in brain. Isoform 1 is expressed in endocrine tissues.

It localises to the cell membrane. The protein resides in the cytoplasm. It is found in the early endosome. Its subcellular location is the recycling endosome. Acts either as the functional imidazoline-1 receptor (I1R) candidate or as a membrane-associated mediator of the I1R signaling. Binds numerous imidazoline ligands that induces initiation of cell-signaling cascades triggering to cell survival, growth and migration. Its activation by the agonist rilmenidine induces an increase in phosphorylation of mitogen-activated protein kinases MAPK1 and MAPK3 in rostral ventrolateral medulla (RVLM) neurons that exhibited rilmenidine-evoked hypotension. Blocking its activation with efaroxan abolished rilmenidine-induced mitogen-activated protein kinase phosphorylation in RVLM neurons. Acts as a modulator of Rac-regulated signal transduction pathways. Suppresses Rac1-stimulated cell migration by interacting with PAK1 and inhibiting its kinase activity. Also blocks Pak-independent Rac signaling by interacting with RAC1 and inhibiting Rac1-stimulated NF-kB response element and cyclin D1 promoter activation. Also inhibits LIMK1 kinase activity by reducing LIMK1 'Tyr-508' phosphorylation. Inhibits Rac-induced cell migration and invasion in breast and colon epithelial cells. Inhibits lamellipodia formation, when overexpressed. Plays a role in protection against apoptosis. Involved in association with IRS4 in the enhancement of insulin activation of MAPK1 and MAPK3. When overexpressed, induces a redistribution of cell surface ITGA5 integrin to intracellular endosomal structures. The sequence is that of Nischarin (NISCH) from Homo sapiens (Human).